Consider the following 203-residue polypeptide: A-type ATP synthase subunit E (203 aa).

It belongs to the V-ATPase E subunit family. As to quaternary structure, has multiple subunits with at least A(3), B(3), C, D, E, F, H, I and proteolipid K(x).

It is found in the cell membrane. Functionally, component of the A-type ATP synthase that produces ATP from ADP in the presence of a proton gradient across the membrane. The chain is A-type ATP synthase subunit E from Thermococcus onnurineus (strain NA1).